A 243-amino-acid chain; its full sequence is MSSPAEYYKSLPPISKAYGTLCFFTTVLVRLHILNPLFLYLYYPRVFKKFEVWRIFTSFFFLGPFSINFGIRLLMIARYGVMLEKGAFDKRTADFLWMMIFGAISLLVLSVIPQLNTYVLGLPMVSMLVYVWSRENPNAQINIYGILQLKAFYLPWVMLLLDVIFGSPLMPGLLGIMVGHLYYYFAVLHPLATGKNYLKTPKWVHKIVARFRIGMQANAPVRAPANGNAGTGAFRGRSYRLNQ.

Topologically, residues 1 to 20 (MSSPAEYYKSLPPISKAYGT) are cytoplasmic. A helical membrane pass occupies residues 21–41 (LCFFTTVLVRLHILNPLFLYL). Topologically, residues 42–54 (YYPRVFKKFEVWR) are lumenal. A helical transmembrane segment spans residues 55 to 75 (IFTSFFFLGPFSINFGIRLLM). Over 76-94 (IARYGVMLEKGAFDKRTAD) the chain is Cytoplasmic. A helical membrane pass occupies residues 95–115 (FLWMMIFGAISLLVLSVIPQL). Residues 116-155 (NTYVLGLPMVSMLVYVWSRENPNAQINIYGILQLKAFYLP) lie on the Lumenal side of the membrane. Residues 156-176 (WVMLLLDVIFGSPLMPGLLGI) form a helical membrane-spanning segment. The Cytoplasmic segment spans residues 177 to 243 (MVGHLYYYFA…FRGRSYRLNQ (67 aa)).

It belongs to the derlin family. In terms of tissue distribution, expressed in roots and endosperm.

It is found in the endoplasmic reticulum membrane. Its function is as follows. May be involved in the degradation process of specific misfolded endoplasmic reticulum (ER) luminal proteins. The sequence is that of Derlin-1.2 (DER1.2) from Zea mays (Maize).